A 57-amino-acid polypeptide reads, in one-letter code: Thiocillin GE37468 (57 aa).

A propeptide spans 1 to 42 (MGNNEEYFIDVNDLSIDVFDVVEQGGAVTALTADHGMPEVGA) (removed in mature form). Residues 43-44 (ST) constitute a cross-link (5-methyloxazole-4-carboxylic acid (Ser-Thr)). A cross-link (pyridine-2,5-dicarboxylic acid (Ser-Cys) (with S-53)) is located at residues 43–52 (STNCFCYICC). Positions 43–53 (STNCFCYICCS) form a cross-link, pyridine-2,5-dicarboxylic acid (Ser-Ser) (with C-52). Positions 45-46 (NC) form a cross-link, thiazole-4-carboxylic acid (Asn-Cys). Residues 47–48 (FC) constitute a cross-link (thiazoline-4-carboxylic acid (Phe-Cys)). 5-hydroxy-3-methylproline (Ile) is present on Ile50. The segment at residues 50-51 (IC) is a cross-link (thiazole-4-carboxylic acid (Ile-Cys)). The segment at residues 51–52 (CC) is a cross-link (thiazole-4-carboxylic acid (Cys-Cys)). The segment at residues 53 to 54 (SC) is a cross-link (thiazole-4-carboxylic acid (Ser-Cys)). Residues Ser55 and Ser56 each carry the 2,3-didehydroalanine (Ser) modification. Asn57 is a propeptide (removed in mature form).

Post-translationally, maturation of thiazole and oxazole containing antibiotics involves the enzymatic condensation of a Cys, Ser or Thr with the alpha-carbonyl of the preceding amino acid to form a thioether or ether bond, then dehydration to form a double bond with the alpha-amino nitrogen. Thiazoline or oxazoline ring are dehydrogenated to form thiazole or oxazole rings. In terms of processing, maturation of pyridinyl containing antibiotics involves the cross-linking of a Ser and a Cys-Ser pair usually separated by 7 or 8 residues along the peptide chain. The Ser residues are dehydrated to didehydroalanines, then bonded between their beta carbons. The alpha carbonyl of the Cys condenses with alpha carbon of the first Ser to form a pyridinyl ring. The ring may be multiply dehydrogenated to form a pyridine ring with loss of the amino nitrogen of the first Ser.

The protein localises to the secreted. Its function is as follows. Has bacteriocidal activity against both aerobic and anaerobic Gram-positive bacteria. Inhibits growth of B.subtilis (MIC=0.047 ug/ml) and methicillin-resistant S.aureus (MRSA) (MIC=0.047 ug/ml). Has poor activity against Gram-negative bacteria, with the exception of B.fragilis. Inhibits bacterial protein biosynthesis by acting on elongation factor Tu (EF-Tu). Full antibiotic activity depends on the presence of the modified residue Ile-50. This is Thiocillin GE37468 (getA) from Streptomyces sp.